A 754-amino-acid chain; its full sequence is Gelsolin, cytoplasmic (754 aa).

The tract at residues 1 to 120 (MVPAFEGAGA…RYLKGGVASG (120 aa)) is actin-severing. The Gelsolin-like 1 repeat unit spans residues 22-71 (FEVVPYPKEKYGQFYQGDSYIVLYTRDVNGNLSWDLHFWLGSETSQDEAG). The actin-actin interfilament contact point stretch occupies residues 68-71 (DEAG). Residues 101 to 108 (LFLSRFKK) and 133 to 141 (RLFHVKGRR) contribute to the a 1,2-diacyl-sn-glycero-3-phospho-(1D-myo-inositol-4,5-bisphosphate) site. A Gelsolin-like 2 repeat occupies 143–183 (IRIRQVEVGVGSMNKGDCFILDCGSQVYAYMGPSSRKMDRL). The disordered stretch occupies residues 209–238 (TASGSEAGESSPGLGGGSPDDVADEDTGVD). Positions 210–220 (ASGSEAGESSP) are enriched in low complexity. Gelsolin-like repeat units lie at residues 266-306 (NMIG…KEKV), 414-463 (LKLE…DEKA), 538-580 (FDTR…EEKA), and 643-684 (LRVN…QEKE). The tract at residues 386-751 (LLQKNAGPAF…MKAQVPETNA (366 aa)) is actin-binding, Ca-sensitive. Residues Gly-430, Asp-431, Glu-461, Asp-556, Glu-578, Asp-659, Asp-660, and Glu-682 each coordinate Ca(2+).

It belongs to the villin/gelsolin family. In terms of tissue distribution, tail muscle.

The protein localises to the cytoplasm. Its subcellular location is the cytoskeleton. Calcium-regulated, actin-modulating protein that binds to the plus (or barbed) ends of actin monomers or filaments, preventing monomer exchange (end-blocking or capping). It can promote the assembly of monomers into filaments (nucleation) as well as sever filaments already formed. In Homarus americanus (American lobster), this protein is Gelsolin, cytoplasmic.